A 262-amino-acid polypeptide reads, in one-letter code: tRNA (guanine-N(1)-)-methyltransferase (262 aa).

Residues Gly-113 and 137 to 142 (IGDYVL) each bind S-adenosyl-L-methionine.

Belongs to the RNA methyltransferase TrmD family. In terms of assembly, homodimer.

The protein resides in the cytoplasm. The enzyme catalyses guanosine(37) in tRNA + S-adenosyl-L-methionine = N(1)-methylguanosine(37) in tRNA + S-adenosyl-L-homocysteine + H(+). Its function is as follows. Specifically methylates guanosine-37 in various tRNAs. The sequence is that of tRNA (guanine-N(1)-)-methyltransferase from Saccharopolyspora erythraea (strain ATCC 11635 / DSM 40517 / JCM 4748 / NBRC 13426 / NCIMB 8594 / NRRL 2338).